Reading from the N-terminus, the 391-residue chain is Sister chromatid cohesion protein DCC1 (391 aa).

It belongs to the DCC1 family. As to quaternary structure, component of the ctf18-RFC complex which consists of ctf18, ctf8, dscc1 and the RFC complex.

Its subcellular location is the nucleus. Functionally, loads pcna onto primed templates regulating velocity, spacing and restart activity of replication forks. May couple DNA replication to sister chromatid cohesion. The sequence is that of Sister chromatid cohesion protein DCC1 (dscc1) from Danio rerio (Zebrafish).